The primary structure comprises 183 residues: Capsid protein (183 aa).

The disordered stretch occupies residues 136–183; that stretch reads NAPILSTLPETTVVRRRGRSPRRRTPSPRRRRSQSPRRRRTQSRESQC. Basic residues predominate over residues 149-176; it reads VRRRGRSPRRRTPSPRRRRSQSPRRRRT. Residues Ser155, Ser162, and Ser170 each carry the phosphoserine; by host modification. A 1; half-length repeat occupies 155–161; that stretch reads SPRRRTP. The tract at residues 155-177 is 3 X 8 AA repeats of S-P-R-R-R-[PR]-[ST]-Q; that stretch reads SPRRRTPSPRRRRSQSPRRRRTQ. Positions 158–175 match the Bipartite nuclear localization signal motif; it reads RRTPSPRRRRSQSPRRRR. Repeat copies occupy residues 162-169 and 170-177. The segment at 177–183 is RNA binding; the sequence is QSRESQC.

It belongs to the orthohepadnavirus core antigen family. In terms of assembly, homodimerizes, then multimerizes. Interacts with cytosol exposed regions of viral L glycoprotein present in the reticulum-to-Golgi compartment. Interacts with human FLNB. Phosphorylated form interacts with host importin alpha; this interaction depends on the exposure of the NLS, which itself depends upon genome maturation and/or phosphorylation of the capsid protein. Interacts with host NUP153. Post-translationally, phosphorylated by host SRPK1, SRPK2, and maybe protein kinase C or GAPDH. Phosphorylation is critical for pregenomic RNA packaging. Protein kinase C phosphorylation is stimulated by HBx protein and may play a role in transport of the viral genome to the nucleus at the late step during the viral replication cycle.

Its subcellular location is the virion. The protein resides in the host cytoplasm. Functionally, self assembles to form an icosahedral capsid. Most capsids appear to be large particles with an icosahedral symmetry of T=4 and consist of 240 copies of capsid protein, though a fraction forms smaller T=3 particles consisting of 180 capsid proteins. Entering capsids are transported along microtubules to the nucleus. Phosphorylation of the capsid is thought to induce exposure of nuclear localization signal in the C-terminal portion of the capsid protein that allows binding to the nuclear pore complex via the importin (karyopherin-) alpha and beta. Capsids are imported in intact form through the nuclear pore into the nuclear basket, where it probably binds NUP153. Only capsids that contain the mature viral genome can release the viral DNA and capsid protein into the nucleoplasm. Immature capsids get stuck in the basket. Capsids encapsulate the pre-genomic RNA and the P protein. Pre-genomic RNA is reverse-transcribed into DNA while the capsid is still in the cytoplasm. The capsid can then either be directed to the nucleus, providing more genomes for transcription, or bud through the endoplasmic reticulum to provide new virions. In Hepatitis B virus genotype D (isolate France/alpha1/1989) (HBV-D), this protein is Capsid protein.